A 106-amino-acid chain; its full sequence is Urease subunit beta (106 aa).

Belongs to the urease beta subunit family. Heterotrimer of UreA (gamma), UreB (beta) and UreC (alpha) subunits. Three heterotrimers associate to form the active enzyme. The apoenzyme interacts with an accessory complex composed of UreD, UreF and UreG, which is required for the assembly of the nickel containing metallocenter of UreC. The UreE protein may also play a direct role as a metallochaperone in nickel transfer to the urease apoprotein.

Its subcellular location is the cytoplasm. It carries out the reaction urea + 2 H2O + H(+) = hydrogencarbonate + 2 NH4(+). It participates in nitrogen metabolism; urea degradation; CO(2) and NH(3) from urea (urease route): step 1/1. With respect to regulation, the apoenzyme can be activated in vitro in the presence of nickel ions and carbon dioxide, which promotes carboxylation of 'Lys-217' of the UreC (alpha) subunit. The polypeptide is Urease subunit beta (Klebsiella aerogenes (Enterobacter aerogenes)).